Consider the following 818-residue polypeptide: ATM interactor (818 aa).

Positions Met1 to Pro34 are enriched in low complexity. Positions Met1–Arg62 are disordered. The C2H2-type 1 zinc finger occupies Ile80–His105. The C2H2-type 2; degenerate zinc-finger motif lies at His161–Glu181. Residues His210–Ser221 show a composition bias toward basic and acidic residues. Disordered stretches follow at residues His210 to Pro284 and Asp603 to Gln625. Positions Pro219 to Gln437 are required for formation of RAD51 foci. Composition is skewed to polar residues over residues Tyr229–Leu243 and Asp603–Asn612.

In terms of assembly, interacts via its C-terminus with ATM. Interacts with DYNLL; this interaction inhibits ATMIN transcriptional activity and hence may play a role in a feedback loop whereby DYNLL1 inhibits transactivation of its own promoter by ATMIN. ATMIN.

The protein localises to the nucleus. In terms of biological role, transcription factor. Plays a crucial role in cell survival and RAD51 foci formation in response to methylating DNA damage. Involved in regulating the activity of ATM in the absence of DNA damage. May play a role in stabilizing ATM. Binds to the DYNLL1 promoter and activates its transcription. The sequence is that of ATM interactor from Mus musculus (Mouse).